A 329-amino-acid chain; its full sequence is MELHILEHRVRVLSVARPGLWLYTHPLIKLLFLPRRSRCKFFSLTETPEDYTLMVDEEGFKELPPSEFLQVAEATWLVLNVSSHSGAAVQAAGVTKIARSVIAPLAEHHVSVLMLSTYQTDFILVREQDLSVVIHTLAQEFDIYREVGGEPVPVTRDDFSNGFPRTQHGPSPTVHPIQSPQNRFCVLTLDPETLPAIATTLIDVLFYSHRTPKEAASSSPEPSSITFFAFSLIEGYISIVMDAETQKKFPSDLLLTSSSGELWRMVRIGGQPLGFDECGIVAQIAGPLAAADISAYYISTFNFDHALVPEDGIGSVIEVLQRRQEGLAS.

Serine 14 carries the post-translational modification Phosphoserine. ACT domains are found at residues 72–138 and 260–321; these read AEAT…HTLA and GELW…EVLQ. Residues 111 to 112, glycine 274, 280 to 281, and 300 to 304 each bind L-arginine; these read SV, IV, and TFNFD.

This sequence belongs to the GATS family. As to quaternary structure, forms homodimers and heterodimers with CASTOR2. Interacts with the GATOR2 complex which is composed of MIOS, SEC13, SEH1L, WDR24 and WDR59; the interaction is negatively regulated by arginine. Interacts with TM4SF5; the interaction is positively regulated by leucine and is negatively regulated by arginine. Post-translationally, phosphorylation at Ser-14 by AKT1, promoting the interaction between CASTOR1 and RNF167. In terms of processing, ubiquitinated by RNF167 via 'Lys-29'-polyubiquitination, leading to its degradation, releasing the GATOR2 complex. Ubiquitination by RNF167 is promoted by phosphorylation at Ser-14 by AKT1.

It is found in the cytoplasm. It localises to the cytosol. In terms of biological role, functions as an intracellular arginine sensor within the amino acid-sensing branch of the TORC1 signaling pathway. As a homodimer or a heterodimer with CASTOR2, binds and inhibits the GATOR subcomplex GATOR2 and thereby mTORC1. Binding of arginine to CASTOR1 allosterically disrupts the interaction of CASTOR1-containing dimers with GATOR2 which can in turn activate mTORC1 and the TORC1 signaling pathway. The sequence is that of Cytosolic arginine sensor for mTORC1 subunit 1 from Pongo abelii (Sumatran orangutan).